Reading from the N-terminus, the 128-residue chain is Otoraplin (128 aa).

The signal sequence occupies residues Met1–Ala17. Disulfide bonds link Cys32-Cys37 and Cys55-Cys127. The region spanning Tyr39–Val110 is the SH3 domain.

It belongs to the MIA/OTOR family. As to expression, highly expressed in cochlea.

It localises to the secreted. The chain is Otoraplin (OTOR) from Homo sapiens (Human).